The chain runs to 229 residues: PKHD-type hydroxylase Rpal_3968 (229 aa).

In terms of domain architecture, Fe2OG dioxygenase spans 78-180 (QIFPPLFNRY…RVASFFWLQS (103 aa)). Fe cation is bound by residues histidine 98, aspartate 100, and histidine 161. Position 171 (arginine 171) interacts with 2-oxoglutarate.

Fe(2+) serves as cofactor. It depends on L-ascorbate as a cofactor.

This chain is PKHD-type hydroxylase Rpal_3968, found in Rhodopseudomonas palustris (strain TIE-1).